A 432-amino-acid polypeptide reads, in one-letter code: Asparagine--tRNA ligase (432 aa).

It belongs to the class-II aminoacyl-tRNA synthetase family. Homodimer.

It localises to the cytoplasm. The catalysed reaction is tRNA(Asn) + L-asparagine + ATP = L-asparaginyl-tRNA(Asn) + AMP + diphosphate + H(+). The sequence is that of Asparagine--tRNA ligase from Lactobacillus gasseri (strain ATCC 33323 / DSM 20243 / BCRC 14619 / CIP 102991 / JCM 1131 / KCTC 3163 / NCIMB 11718 / NCTC 13722 / AM63).